The primary structure comprises 710 residues: Forkhead box protein P2 (710 aa).

Over residues 1–28 (MMQESATETISNSSMNQNGMSTLSSQLD) the composition is skewed to polar residues. Disordered stretches follow at residues 1-44 (MMQE…SSEV) and 272-334 (HSQE…TGAS). The segment covering 273–283 (SQEDNGIKHGG) has biased composition (basic and acidic residues). Residues 287–300 (TTNNSSSTTSSTTS) are compositionally biased toward low complexity. The segment covering 310–319 (SIVNGQSSVL) has biased composition (polar residues). A compositionally biased stretch (basic and acidic residues) spans 321-332 (ARRDSSSHEETG). The C2H2-type zinc-finger motif lies at 343 to 366 (CKWPGCESICEDFGQFLKHLNNEH). The interval 383–404 (VQQLEIQLSKERERLQAMMTHL) is leucine-zipper. The tract at residues 417-421 (PLNLV) is CTBP1-binding. Over residues 433 to 454 (TSPQSLPQTPTTPTAPVTPITQ) the composition is skewed to low complexity. The segment at 433–460 (TSPQSLPQTPTTPTAPVTPITQGPSVIT) is disordered. The segment at residues 499–589 (RPPFTYATLI…SQKITGSPTL (91 aa)) is a DNA-binding region (fork-head). Disordered regions lie at residues 644-663 (LDHI…QPHI) and 673-710 (VIAE…EDLE). Positions 694–710 (LEDDREIEEEPLSEDLE) are enriched in acidic residues.

As to quaternary structure, forms homodimers and heterodimers with FOXP1 and FOXP4. Dimerization is required for DNA-binding. Interacts with CTBP1. Interacts with FOXP1. Interacts with TBR1. Interacts with ZMYM2.

It localises to the nucleus. In terms of biological role, transcriptional repressor that may play a role in the specification and differentiation of lung epithelium. May also play a role in developing neural, gastrointestinal and cardiovascular tissues. Can act with CTBP1 to synergistically repress transcription but CTPBP1 is not essential. Plays a role in synapse formation by regulating SRPX2 levels. The chain is Forkhead box protein P2 (Foxp2) from Rattus norvegicus (Rat).